A 778-amino-acid chain; its full sequence is Ent-sandaracopimaradiene synthase KSL3, chloroplastic (778 aa).

The transit peptide at 1–35 (MLLTSTNTLKISSQRKEWEAKDLTGMFHGQVNGRV) directs the protein to the chloroplast. Positions 527, 531, 670, 671, and 678 each coordinate Mg(2+). The DDXXD motif motif lies at 527–531 (DDFFE).

Belongs to the terpene synthase family. Mg(2+) serves as cofactor.

It is found in the plastid. The protein resides in the chloroplast. It carries out the reaction ent-copalyl diphosphate = ent-sandaracopimara-8(14),15-diene + diphosphate. The enzyme catalyses ent-copalyl diphosphate = ent-(12E)-labda-8(17),12,14-triene + diphosphate. The protein operates within secondary metabolite biosynthesis; terpenoid biosynthesis. Diterpene cyclase involved in the biosynthesis of labdane-related diterpenoids (LRDs) natural products. Catalyzes the cyclization of ent-CDP into ent-sandaracopimaradiene as a major, and ent-pimaradiene and ent-labdatriene as minor products. This Ricinus communis (Castor bean) protein is Ent-sandaracopimaradiene synthase KSL3, chloroplastic.